Consider the following 373-residue polypeptide: MISQREEREEKKQRVMGDKKLISSSSSSSVYDTRINHHLHHPPSSSDEISQFLRHIFDRSSPLPSYYSPATTTTTASLIGVHGSGDPHADNSRSLVSHHPPSDSVLMSKRVGDFSEVLIGGGSGSAAACFGFSGGGNNNNVQGNSSGTRVSSSSVGASGNETDEYDCESEEGGEAVVDEAPSSKSGPSSRSSSKRCRAAEVHNLSEKRRRSRINEKMKALQSLIPNSNKTDKASMLDEAIEYLKQLQLQVQMLTMRNGINLHPLCLPGTTLHPLQLSQIRPPEATNDPLLNHTNQFASTSNAPEMINTVASSYALEPSIRSHFGPFPLLTSPVEMSREGGLTHPRLNIGHSNANITGEQALFDGQPDLKDRIT.

The span at 1-21 (MISQREEREEKKQRVMGDKKL) shows a compositional bias: basic and acidic residues. Disordered stretches follow at residues 1–46 (MISQ…PSSS) and 141–210 (VQGN…KRRR). Residues 141 to 160 (VQGNSSGTRVSSSSVGASGN) are compositionally biased toward low complexity. Positions 161-177 (ETDEYDCESEEGGEAVV) are enriched in acidic residues. The span at 182-191 (SSKSGPSSRS) shows a compositional bias: low complexity. Basic and acidic residues predominate over residues 197–210 (RAAEVHNLSEKRRR). The region spanning 197–246 (RAAEVHNLSEKRRRSRINEKMKALQSLIPNSNKTDKASMLDEAIEYLKQL) is the bHLH domain.

Homodimer. Interacts with HEC1, HEC2 and HEC3. Binds to RGL2 and RGA. Expressed in lateral root caps, young leaves, stipules, maturing pith cells of the stem, differentiating vascular cells, shoot apical meristems and flowers.

It is found in the nucleus. In terms of biological role, transcription factor that plays a role in floral organogenesis. Promotes the growth of carpel margins and of pollen tract tissues derived from them. The sequence is that of Transcription factor SPATULA (SPT) from Arabidopsis thaliana (Mouse-ear cress).